Here is a 115-residue protein sequence, read N- to C-terminus: Large ribosomal subunit protein bL20c (115 aa).

This sequence belongs to the bacterial ribosomal protein bL20 family.

It is found in the plastid. The protein resides in the chloroplast. In terms of biological role, binds directly to 23S ribosomal RNA and is necessary for the in vitro assembly process of the 50S ribosomal subunit. It is not involved in the protein synthesizing functions of that subunit. In Gnetum parvifolium (Small-leaved jointfir), this protein is Large ribosomal subunit protein bL20c.